The following is a 483-amino-acid chain: Glutamate--tRNA ligase (483 aa).

A 'HIGH' region motif is present at residues 9–19 (PSPTGYLHIGN). A 'KMSKS' region motif is present at residues 250–254 (KLSKR). Residue Lys253 coordinates ATP.

The protein belongs to the class-I aminoacyl-tRNA synthetase family. Glutamate--tRNA ligase type 1 subfamily. In terms of assembly, monomer.

The protein resides in the cytoplasm. It catalyses the reaction tRNA(Glu) + L-glutamate + ATP = L-glutamyl-tRNA(Glu) + AMP + diphosphate. Functionally, catalyzes the attachment of glutamate to tRNA(Glu) in a two-step reaction: glutamate is first activated by ATP to form Glu-AMP and then transferred to the acceptor end of tRNA(Glu). In Blochmanniella floridana, this protein is Glutamate--tRNA ligase.